Here is a 112-residue protein sequence, read N- to C-terminus: Protein Tat (112 aa).

Residues 1 to 24 (MDPVDPEMPPWHHPGSKPQTPCNN) are interaction with human CREBBP. The tract at residues 1–48 (MDPVDPEMPPWHHPGSKPQTPCNNCYCKRCCYHCYVCFTKKGLGISHG) is transactivation. Zn(2+) is bound by residues Cys-22, Cys-25, and Cys-27. The tract at residues 22-37 (CNNCYCKRCCYHCYVC) is cysteine-rich. Lys-28 carries the N6-acetyllysine; by host PCAF modification. Zn(2+)-binding residues include Cys-30, His-33, Cys-34, and Cys-37. Positions 38-48 (FTKKGLGISHG) are core. A disordered region spans residues 45–112 (ISHGRKKRRR…CNSCTRISGQ (68 aa)). Positions 49–56 (RKKRRRPA) match the Nuclear localization signal, RNA-binding (TAR), and protein transduction motif. The interaction with the host capping enzyme RNGTT stretch occupies residues 49–82 (RKKRRRPAAAASYPDNKDPVPEQHTGRKQKRQEE). N6-acetyllysine; by host EP300 and GCN5L2 is present on residues Lys-50 and Lys-51. Arg-52 and Arg-53 each carry asymmetric dimethylarginine; by host PRMT6. A compositionally biased stretch (basic and acidic residues) spans 63-91 (DNKDPVPEQHTGRKQKRQEEQEKKVEKET). A compositionally biased stretch (polar residues) spans 93–112 (PSGQPCHQDSCNSCTRISGQ).

This sequence belongs to the lentiviruses Tat family. Interacts with host CCNT1. Associates with the P-TEFb complex composed at least of Tat, P-TEFb (CDK9 and CCNT1), TAR RNA, RNA Pol II. Recruits the HATs CREBBP, TAF1/TFIID, EP300, PCAF and GCN5L2. Interacts with host KAT5/Tip60; this interaction targets the latter to degradation. Interacts with the host deacetylase SIRT1. Interacts with host capping enzyme RNGTT; this interaction stimulates RNGTT. Binds to host KDR, and to the host integrins ITGAV/ITGB3 and ITGA5/ITGB1. Interacts with host KPNB1/importin beta-1 without previous binding to KPNA1/importin alpha-1. Interacts with EIF2AK2. Interacts with host nucleosome assembly protein NAP1L1; this interaction may be required for the transport of Tat within the nucleus, since the two proteins interact at the nuclear rim. Interacts with host C1QBP/SF2P32; this interaction involves lysine-acetylated Tat. Interacts with the host chemokine receptors CCR2, CCR3 and CXCR4. Interacts with host DPP4/CD26; this interaction may trigger an anti-proliferative effect. Interacts with host LDLR. Interacts with the host extracellular matrix metalloproteinase MMP1. Interacts with host PRMT6; this interaction mediates Tat's methylation. Interacts with, and is ubiquitinated by MDM2/Hdm2. Interacts with host PSMC3 and HTATIP2. Interacts with STAB1; this interaction may overcome SATB1-mediated repression of IL2 and IL2RA (interleukin) in T cells by binding to the same domain than HDAC1. Interacts (when acetylated) with human CDK13, thereby increasing HIV-1 mRNA splicing and promoting the production of the doubly spliced HIV-1 protein Nef. Interacts with host TBP; this interaction modulates the activity of transcriptional pre-initiation complex. Interacts with host RELA. Interacts with host PLSCR1; this interaction negatively regulates Tat transactivation activity by altering its subcellular distribution. Asymmetrical arginine methylation by host PRMT6 seems to diminish the transactivation capacity of Tat and affects the interaction with host CCNT1. In terms of processing, acetylation by EP300, CREBBP, GCN5L2/GCN5 and PCAF regulates the transactivation activity of Tat. EP300-mediated acetylation of Lys-50 promotes dissociation of Tat from the TAR RNA through the competitive binding to PCAF's bromodomain. In addition, the non-acetylated Tat's N-terminus can also interact with PCAF. PCAF-mediated acetylation of Lys-28 enhances Tat's binding to CCNT1. Lys-50 is deacetylated by SIRT1. Post-translationally, polyubiquitination by host MDM2 does not target Tat to degradation, but activates its transactivation function and fosters interaction with CCNT1 and TAR RNA. Phosphorylated by EIF2AK2 on serine and threonine residues adjacent to the basic region important for TAR RNA binding and function. Phosphorylation of Tat by EIF2AK2 is dependent on the prior activation of EIF2AK2 by dsRNA.

The protein resides in the host nucleus. It is found in the host nucleolus. It localises to the host cytoplasm. Its subcellular location is the secreted. Functionally, transcriptional activator that increases RNA Pol II processivity, thereby increasing the level of full-length viral transcripts. Recognizes a hairpin structure at the 5'-LTR of the nascent viral mRNAs referred to as the transactivation responsive RNA element (TAR) and recruits the cyclin T1-CDK9 complex (P-TEFb complex) that will in turn hyperphosphorylate the RNA polymerase II to allow efficient elongation. The CDK9 component of P-TEFb and other Tat-activated kinases hyperphosphorylate the C-terminus of RNA Pol II that becomes stabilized and much more processive. Other factors such as HTATSF1/Tat-SF1, SUPT5H/SPT5, and HTATIP2 are also important for Tat's function. Besides its effect on RNA Pol II processivity, Tat induces chromatin remodeling of proviral genes by recruiting the histone acetyltransferases (HATs) CREBBP, EP300 and PCAF to the chromatin. This also contributes to the increase in proviral transcription rate, especially when the provirus integrates in transcriptionally silent region of the host genome. To ensure maximal activation of the LTR, Tat mediates nuclear translocation of NF-kappa-B by interacting with host RELA. Through its interaction with host TBP, Tat may also modulate transcription initiation. Tat can reactivate a latently infected cell by penetrating in it and transactivating its LTR promoter. In the cytoplasm, Tat is thought to act as a translational activator of HIV-1 mRNAs. Extracellular circulating Tat can be endocytosed by surrounding uninfected cells via the binding to several surface receptors such as CD26, CXCR4, heparan sulfate proteoglycans (HSPG) or LDLR. Neurons are rarely infected, but they internalize Tat via their LDLR. Through its interaction with nuclear HATs, Tat is potentially able to control the acetylation-dependent cellular gene expression. Modulates the expression of many cellular genes involved in cell survival, proliferation or in coding for cytokines or cytokine receptors. Tat plays a role in T-cell and neurons apoptosis. Tat induced neurotoxicity and apoptosis probably contribute to neuroAIDS. Circulating Tat also acts as a chemokine-like and/or growth factor-like molecule that binds to specific receptors on the surface of the cells, affecting many cellular pathways. In the vascular system, Tat binds to ITGAV/ITGB3 and ITGA5/ITGB1 integrins dimers at the surface of endothelial cells and competes with bFGF for heparin-binding sites, leading to an excess of soluble bFGF. The sequence is that of Protein Tat from Homo sapiens (Human).